Reading from the N-terminus, the 868-residue chain is Protein translocase subunit SecA (868 aa).

Residues glutamine 88, 106-110 (GEGKT), and aspartate 509 each bind ATP. The segment covering 816 to 827 (NAENEPLNYNNQ) has biased composition (polar residues). The interval 816–868 (NAENEPLNYNNQGEDENFTPEKKIPRNAPCPCGSGKKYKDCHGKSGPKKGIFA) is disordered. Zn(2+) contacts are provided by cysteine 845, cysteine 847, cysteine 856, and histidine 857.

The protein belongs to the SecA family. Monomer and homodimer. Part of the essential Sec protein translocation apparatus which comprises SecA, SecYEG and auxiliary proteins SecDF-YajC and YidC. Zn(2+) is required as a cofactor.

Its subcellular location is the cell inner membrane. The protein resides in the cytoplasm. It carries out the reaction ATP + H2O + cellular proteinSide 1 = ADP + phosphate + cellular proteinSide 2.. In terms of biological role, part of the Sec protein translocase complex. Interacts with the SecYEG preprotein conducting channel. Has a central role in coupling the hydrolysis of ATP to the transfer of proteins into and across the cell membrane, serving as an ATP-driven molecular motor driving the stepwise translocation of polypeptide chains across the membrane. This is Protein translocase subunit SecA from Campylobacter concisus (strain 13826).